The sequence spans 72 residues: Crustacean hyperglycemic hormone (72 aa).

3 disulfide bridges follow: cysteine 7–cysteine 43, cysteine 23–cysteine 39, and cysteine 26–cysteine 52. Valine 72 is subject to Valine amide.

The protein resides in the secreted. In terms of biological role, hormone found in the sinus gland of isopods and decapods which controls the blood sugar level. Has a secretagogue action over the amylase released from the midgut gland. May act as a stress hormone and may be involved in the control of molting and reproduction. The polypeptide is Crustacean hyperglycemic hormone (Penaeus schmitti (White shrimp)).